The chain runs to 148 residues: MRVIVQRSQQAQVSIDGKVRGTIDHGFVLLVGFQDGDGQAELDYIAHKILNLRVFSDADGKMNLNIQQVGGAILSISQFTLYAETRHGNRPSFTAAGNPELASKLYDTFNQQLAASGVTVATGEFGADMQVSLVNDGPVTICYDTDQR.

Positions 137–138 match the Gly-cisPro motif, important for rejection of L-amino acids motif; sequence GP.

The protein belongs to the DTD family. In terms of assembly, homodimer.

It localises to the cytoplasm. The enzyme catalyses glycyl-tRNA(Ala) + H2O = tRNA(Ala) + glycine + H(+). It catalyses the reaction a D-aminoacyl-tRNA + H2O = a tRNA + a D-alpha-amino acid + H(+). Functionally, an aminoacyl-tRNA editing enzyme that deacylates mischarged D-aminoacyl-tRNAs. Also deacylates mischarged glycyl-tRNA(Ala), protecting cells against glycine mischarging by AlaRS. Acts via tRNA-based rather than protein-based catalysis; rejects L-amino acids rather than detecting D-amino acids in the active site. By recycling D-aminoacyl-tRNA to D-amino acids and free tRNA molecules, this enzyme counteracts the toxicity associated with the formation of D-aminoacyl-tRNA entities in vivo and helps enforce protein L-homochirality. The sequence is that of D-aminoacyl-tRNA deacylase from Lactiplantibacillus plantarum (strain ATCC BAA-793 / NCIMB 8826 / WCFS1) (Lactobacillus plantarum).